The sequence spans 132 residues: Small ribosomal subunit protein uS8 (132 aa).

Belongs to the universal ribosomal protein uS8 family. As to quaternary structure, part of the 30S ribosomal subunit. Contacts proteins S5 and S12.

Functionally, one of the primary rRNA binding proteins, it binds directly to 16S rRNA central domain where it helps coordinate assembly of the platform of the 30S subunit. This Clostridium kluyveri (strain NBRC 12016) protein is Small ribosomal subunit protein uS8.